A 98-amino-acid chain; its full sequence is uncharacterized protein (98 aa).

The helical transmembrane segment at 10-30 (LYGFFAVTGVLIASFIIGEIV) threads the bilayer.

The protein localises to the host membrane. This is an uncharacterized protein from Saccharolobus islandicus (Sulfolobus islandicus).